Consider the following 159-residue polypeptide: Ribosomal RNA large subunit methyltransferase H (159 aa).

S-adenosyl-L-methionine-binding positions include Leu76, Gly108, and 127–132; that span reads FSKMTF.

This sequence belongs to the RNA methyltransferase RlmH family. As to quaternary structure, homodimer.

It localises to the cytoplasm. It carries out the reaction pseudouridine(1915) in 23S rRNA + S-adenosyl-L-methionine = N(3)-methylpseudouridine(1915) in 23S rRNA + S-adenosyl-L-homocysteine + H(+). In terms of biological role, specifically methylates the pseudouridine at position 1915 (m3Psi1915) in 23S rRNA. This Clostridium botulinum (strain Alaska E43 / Type E3) protein is Ribosomal RNA large subunit methyltransferase H.